A 146-amino-acid chain; its full sequence is SETIDLQGGKAFGLLKAQQEGRLNEINKQFLDDPKYSSDEDLSRKLEAFKQKYMEFDLNGNGDIDIMSLKRMLEKLGVPKTHLELKKLIKEVSSGSGETFSYSIFLKMMLGKRSAILKMILMYEEKAREQEKPTGPPAKKAISELP.

Serine 1 carries the post-translational modification N-acetylserine. Lysine 10 is subject to N6-acetyllysine. Serine 38 is subject to Phosphoserine. Positions 44–79 constitute an EF-hand 1 domain; the sequence is RKLEAFKQKYMEFDLNGNGDIDIMSLKRMLEKLGVP. Ca(2+) contacts are provided by aspartate 57, asparagine 59, asparagine 61, aspartate 63, and threonine 99. The EF-hand 2; degenerate domain occupies 81-115; the sequence is THLELKKLIKEVSSGSGETFSYSIFLKMMLGKRSA. The interval 127-146 is disordered; that stretch reads AREQEKPTGPPAKKAISELP.

In terms of assembly, homodimer (Potential). Monomer. Interacts with LCP1. As to expression, microglial cells in the central nervous system and dendritic cells and macrophages in several organs.

Its subcellular location is the cytoplasm. It localises to the cytoskeleton. It is found in the cell projection. The protein localises to the ruffle membrane. The protein resides in the phagocytic cup. Actin-binding protein that enhances membrane ruffling and RAC activation. Enhances the actin-bundling activity of LCP1. Binds calcium. Plays a role in RAC signaling and in phagocytosis. May play a role in macrophage activation and function. Promotes the proliferation of vascular smooth muscle cells and of T-lymphocytes. Enhances lymphocyte migration. Plays a role in vascular inflammation. Has a dual influence on glucose-induced insulin secretion: inhibition at low concentration and stimulation at high concentrations. The polypeptide is Allograft inflammatory factor 1 (AIF1) (Sus scrofa (Pig)).